Here is a 2148-residue protein sequence, read N- to C-terminus: Polyketide synthase 1 (2148 aa).

The interval 19–261 is N-terminal acylcarrier protein transacylase domain (SAT); that stretch reads FIFGDQSSCN…TPLAVHAPYH (243 aa). Residues 394–829 form the Ketosynthase family 3 (KS3) domain; sequence ESKIAIIGMS…GGNTALLVED (436 aa). Residues C566, H701, and H745 each act as for beta-ketoacyl synthase activity in the active site. A malonyl-CoA:ACP transacylase (MAT) domain region spans residues 929 to 1233; sequence AFVFSGQGSQ…PSLMRNKDGW (305 aa). S1018 (for acyl/malonyl transferase activity) is an active-site residue. A product template (PT) domain region spans residues 1310–1624; the sequence is TASVHRIVHE…RKVLNTAMPP (315 aa). Residues 1314–1447 are N-terminal hotdog fold; it reads HRIVHESVEK…SSLHFEQPKV (134 aa). In terms of domain architecture, PKS/mFAS DH spans 1314–1619; that stretch reads HRIVHESVEK…FQGIPRKVLN (306 aa). H1346 functions as the Proton acceptor; for dehydratase activity in the catalytic mechanism. The interval 1474–1619 is C-terminal hotdog fold; the sequence is LNSRMSSGVI…FQGIPRKVLN (146 aa). Residue D1533 is the Proton donor; for dehydratase activity of the active site. A disordered region spans residues 1619-1655; it reads NTAMPPPKSQNEAPVRSGPAKPAAKPPRSASSEHSGH. Residues 1634-1650 are compositionally biased toward low complexity; the sequence is RSGPAKPAAKPPRSASS. Residues 1678 to 1752 form the Carrier 1 domain; it reads RNPMLPVFKI…DLAAHLGLDT (75 aa). An O-(pantetheine 4'-phosphoryl)serine modification is found at S1712. Composition is skewed to low complexity over residues 1757-1769 and 1779-1796; these read QSSGQSSSFGGLS and TSSVTTPPSLSPRSSVSG. Residues 1757–1796 form a disordered region; it reads QSSGQSSSFGGLSPRSDSIGEITSSVTTPPSLSPRSSVSG. The region spanning 1793 to 1870 is the Carrier 2 domain; sequence SVSGSQCKDV…SFKHMFQQGH (78 aa). Residue S1830 is modified to O-(pantetheine 4'-phosphoryl)serine. Positions 1882-2146 are thioesterase (TE) domain; sequence LKQYRATSTL…ERVAAFIRST (265 aa). The active-site For thioesterase activity is S1973.

Polyketide synthase; part of the Pks1 gene cluster that mediates the biosynthesis of an anthraquinone derivative pigment that contributes to conidial pigmentation that provides protection from UV radiation, heat and cold stress. The polyketide synthase Pks1 produces 1-acetyl-2,4,6,8-tetrahydroxy-9,10-anthraquinone though condensation of acetyl-CoA with malonyl-CoA. The dehydratase EthD and the laccase Mlac1 further convert the anthraquinone derivative into the final conidial pigment. The protein is Polyketide synthase 1 of Metarhizium anisopliae (strain ARSEF 549).